A 426-amino-acid chain; its full sequence is 3-phosphoshikimate 1-carboxyvinyltransferase (426 aa).

3-phosphoshikimate is bound by residues Lys-22, Ser-23, and Arg-27. Lys-22 lines the phosphoenolpyruvate pocket. Phosphoenolpyruvate is bound by residues Gly-96 and Arg-124. 3-phosphoshikimate is bound by residues Ser-170, Ser-171, Gln-172, Ser-198, Asp-314, Asn-337, and Lys-341. A phosphoenolpyruvate-binding site is contributed by Gln-172. Asp-314 serves as the catalytic Proton acceptor. Residues Arg-345, Arg-387, and Lys-412 each coordinate phosphoenolpyruvate.

It belongs to the EPSP synthase family. As to quaternary structure, monomer.

The protein localises to the cytoplasm. It carries out the reaction 3-phosphoshikimate + phosphoenolpyruvate = 5-O-(1-carboxyvinyl)-3-phosphoshikimate + phosphate. It participates in metabolic intermediate biosynthesis; chorismate biosynthesis; chorismate from D-erythrose 4-phosphate and phosphoenolpyruvate: step 6/7. In terms of biological role, catalyzes the transfer of the enolpyruvyl moiety of phosphoenolpyruvate (PEP) to the 5-hydroxyl of shikimate-3-phosphate (S3P) to produce enolpyruvyl shikimate-3-phosphate and inorganic phosphate. This is 3-phosphoshikimate 1-carboxyvinyltransferase from Shewanella baltica (strain OS185).